The chain runs to 155 residues: Transcriptional regulator MraZ (155 aa).

SpoVT-AbrB domains are found at residues 15–62 (TYEN…GMDR) and 93–136 (SEEL…NPTA).

This sequence belongs to the MraZ family. In terms of assembly, forms oligomers.

Its subcellular location is the cytoplasm. The protein localises to the nucleoid. The sequence is that of Transcriptional regulator MraZ from Rhodospirillum rubrum (strain ATCC 11170 / ATH 1.1.1 / DSM 467 / LMG 4362 / NCIMB 8255 / S1).